The chain runs to 87 residues: Pro-gurmarin (87 aa).

A signal peptide spans 1–20 (MAKFAAIVLLILVASATVNA). Residues 21–52 (VKEHDELPTTGMSRKILLQPVFKSLIISIAEG) constitute a propeptide that is removed on maturation. The residue at position 53 (glutamine 53) is a Pyrrolidone carboxylic acid. 3 cysteine pairs are disulfide-bonded: cysteine 55-cysteine 70, cysteine 62-cysteine 75, and cysteine 69-cysteine 85.

Expressed in leaves (at protein level).

Functionally, peptide that strongly, but reversibly, suppresses the sweet taste-response to various sweeteners, including sugars, sweet amino acids and the artificial sweetener saccharin. In rodents, potentially binds to a sweet taste receptor present on apical microvilli of a subset of taste bud cells. Highly effective at blocking the sweet taste-response in rodents such as rats and mice, though mice may possess a mix of gurmarin-sensitive and -insensitive receptors. Has almost no effect on the sweet taste-response in humans. Inhibits Staphylococcus aureus biofilm formation without affecting bacterial viability. May be one of at least 9 different disulfide-rich peptides produced with varying properties. This Gymnema sylvestre (Gurmar) protein is Pro-gurmarin.